Consider the following 593-residue polypeptide: Probable 5'-nucleotidase (593 aa).

An N-terminal signal peptide occupies residues 1–21 (MKRFIPHRVIHAVCIGLALVG). The N-palmitoyl cysteine moiety is linked to residue Cys-22. The S-diacylglycerol cysteine moiety is linked to residue Cys-22. Residues Asp-41, His-43, Asp-91, Asn-123, and His-224 each coordinate a divalent metal cation. Substrate is bound by residues Phe-456 and 539-545 (YIARGKD).

The protein belongs to the 5'-nucleotidase family. Requires a divalent metal cation as cofactor.

The protein resides in the cell membrane. The catalysed reaction is a ribonucleoside 5'-phosphate + H2O = a ribonucleoside + phosphate. The protein is Probable 5'-nucleotidase of Treponema pallidum (strain Nichols).